The chain runs to 245 residues: DNA polymerase sliding clamp 2 (245 aa).

Belongs to the PCNA family. Homotrimer. The subunits circularize to form a toroid; DNA passes through its center. Replication factor C (RFC) is required to load the toroid on the DNA.

Its function is as follows. Sliding clamp subunit that acts as a moving platform for DNA processing. Responsible for tethering the catalytic subunit of DNA polymerase and other proteins to DNA during high-speed replication. This Sulfolobus acidocaldarius (strain ATCC 33909 / DSM 639 / JCM 8929 / NBRC 15157 / NCIMB 11770) protein is DNA polymerase sliding clamp 2.